A 1363-amino-acid polypeptide reads, in one-letter code: Collagen alpha-2(I) chain (1363 aa).

The signal sequence occupies residues 1-22 (MLSFVDTRILLLLAVTSYLATS). Residue Gln-23 is modified to Pyrrolidone carboxylic acid. Positions 23–77 (QHLFQASAGRKGPRGDKGPQGERGPPGPPGRDGEDGPPGPPGPPGPPGLGGNFAA) are cleaved as a propeptide — N-terminal propeptide. The disordered stretch occupies residues 28–1110 (ASAGRKGPRG…GPNGGGYEVG (1083 aa)). Over residues 59–69 (PPGPPGPPGPP) the composition is skewed to pro residues. Gln-78 bears the Pyrrolidone carboxylic acid mark. An Allysine modification is found at Lys-83. The span at 88 to 97 (GPGPMGLMGP) shows a compositional bias: low complexity. The segment covering 98–110 (RGPPGASGPPGPP) has biased composition (pro residues). Residues 112 to 128 (FQGVPGEPGEPGQTGPQ) show a composition bias toward low complexity. The span at 140-154 (AGEDGHPGKPGRPGE) shows a compositional bias: basic and acidic residues. Lys-176 bears the 5-hydroxylysine; alternate mark. O-linked (Gal...) hydroxylysine; alternate glycosylation is present at Lys-176. Composition is skewed to low complexity over residues 224 to 263 (IGAP…PGAK) and 299 to 320 (PGAN…AGAP). Residues 322 to 335 (LPGPRGIPGPPGPA) show a composition bias toward pro residues. Pro-440 and Pro-443 each carry 4-hydroxyproline. 2 stretches are compositionally biased toward low complexity: residues 601-610 (PAGPIGSRGP) and 674-683 (RGLPGAIGAP). A compositionally biased stretch (gly residues) spans 684–699 (GPAGGAGDRGEGGPAG). Positions 721-736 (PSGFAGPPGAAGQPGA) are enriched in low complexity. Basic and acidic residues predominate over residues 737 to 746 (KGERGPKGPK). 5 stretches are compositionally biased toward low complexity: residues 748–794 (ETGP…AGRV), 842–875 (AGEK…LGLP), 898–931 (VSGP…NPGN), 955–965 (PSGALGAPGPH), and 986–995 (VGPAGAFGPR). A compositionally biased stretch (basic and acidic residues) spans 1004-1015 (RGEKGEPGDKGH). The segment covering 1036–1049 (QHGDQGPPGNNGPA) has biased composition (low complexity). Composition is skewed to pro residues over residues 1051-1060 (PRGPPGPSGP) and 1088-1102 (AGPP…PPGP). A propeptide spans 1118–1363 (ADQPSLRPKD…GLHIGPVCFK (246 aa)) (C-terminal propeptide). The region spanning 1128–1363 (YEVDATLKTL…GLHIGPVCFK (236 aa)) is the Fibrillar collagen NC1 domain. 3 disulfide bridges follow: Cys-1158/Cys-1190, Cys-1198/Cys-1361, and Cys-1269/Cys-1314. Ca(2+) contacts are provided by Asp-1176, Asn-1178, Gln-1179, Cys-1181, and Asp-1184. Asn-1264 carries N-linked (GlcNAc...) asparagine glycosylation.

The protein belongs to the fibrillar collagen family. Trimers of one alpha 2(I) and two alpha 1(I) chains. Prolines at the third position of the tripeptide repeating unit (G-X-Y) are hydroxylated in some or all of the chains. Post-translationally, the N-terminus of the mature protein is blocked. As to expression, forms the fibrils of tendon, ligaments and bones. In bones the fibrils are mineralized with calcium hydroxyapatite.

The protein localises to the secreted. It localises to the extracellular space. The protein resides in the extracellular matrix. Type I collagen is a member of group I collagen (fibrillar forming collagen). The chain is Collagen alpha-2(I) chain (COL1A2) from Gallus gallus (Chicken).